The primary structure comprises 391 residues: tRNA (cytosine(38)-C(5))-methyltransferase (391 aa).

The 388-residue stretch at 4–391 (LRALELYSGI…VAKLIKILCD (388 aa)) folds into the SAM-dependent MTase C5-type domain. S-adenosyl-L-methionine is bound by residues 13 to 15 (IGG), Asp-34, 57 to 58 (IE), and Ser-76. Cys-79 is an active-site residue. Ser-376 is an S-adenosyl-L-methionine binding site.

This sequence belongs to the class I-like SAM-binding methyltransferase superfamily. C5-methyltransferase family.

The protein resides in the cytoplasm. It carries out the reaction cytidine(38) in tRNA + S-adenosyl-L-methionine = 5-methylcytidine(38) in tRNA + S-adenosyl-L-homocysteine + H(+). In terms of biological role, specifically methylates cytosine 38 in the anticodon loop of tRNA(Asp). Has higher activity on tRNA(Asp) modified with queuosine at position 34. This chain is tRNA (cytosine(38)-C(5))-methyltransferase (TRDMT1), found in Bos taurus (Bovine).